Reading from the N-terminus, the 373-residue chain is 4-hydroxy-3-methylbut-2-en-1-yl diphosphate synthase (flavodoxin) (373 aa).

Cysteine 268, cysteine 271, cysteine 303, and glutamate 310 together coordinate [4Fe-4S] cluster.

The protein belongs to the IspG family. Requires [4Fe-4S] cluster as cofactor.

It carries out the reaction (2E)-4-hydroxy-3-methylbut-2-enyl diphosphate + oxidized [flavodoxin] + H2O + 2 H(+) = 2-C-methyl-D-erythritol 2,4-cyclic diphosphate + reduced [flavodoxin]. It functions in the pathway isoprenoid biosynthesis; isopentenyl diphosphate biosynthesis via DXP pathway; isopentenyl diphosphate from 1-deoxy-D-xylulose 5-phosphate: step 5/6. In terms of biological role, converts 2C-methyl-D-erythritol 2,4-cyclodiphosphate (ME-2,4cPP) into 1-hydroxy-2-methyl-2-(E)-butenyl 4-diphosphate. In Exiguobacterium sp. (strain ATCC BAA-1283 / AT1b), this protein is 4-hydroxy-3-methylbut-2-en-1-yl diphosphate synthase (flavodoxin).